Reading from the N-terminus, the 124-residue chain is Small ribosomal subunit protein uS12 (124 aa).

D89 bears the 3-methylthioaspartic acid mark. The tract at residues 105–124 is disordered; sequence QGVKNRGQARSRYGAKKEKK. A compositionally biased stretch (basic residues) spans 111 to 124; the sequence is GQARSRYGAKKEKK.

The protein belongs to the universal ribosomal protein uS12 family. Part of the 30S ribosomal subunit. Contacts proteins S8 and S17. May interact with IF1 in the 30S initiation complex.

With S4 and S5 plays an important role in translational accuracy. Its function is as follows. Interacts with and stabilizes bases of the 16S rRNA that are involved in tRNA selection in the A site and with the mRNA backbone. Located at the interface of the 30S and 50S subunits, it traverses the body of the 30S subunit contacting proteins on the other side and probably holding the rRNA structure together. The combined cluster of proteins S8, S12 and S17 appears to hold together the shoulder and platform of the 30S subunit. This chain is Small ribosomal subunit protein uS12, found in Micrococcus luteus (Micrococcus lysodeikticus).